Here is a 245-residue protein sequence, read N- to C-terminus: Probable transcriptional regulatory protein pc1328 (245 aa).

The protein belongs to the TACO1 family.

Its subcellular location is the cytoplasm. This chain is Probable transcriptional regulatory protein pc1328, found in Protochlamydia amoebophila (strain UWE25).